The chain runs to 167 residues: Ureidoglycolate lyase (167 aa).

Belongs to the ureidoglycolate lyase family. In terms of assembly, homodimer. It depends on Ni(2+) as a cofactor.

It catalyses the reaction (S)-ureidoglycolate = urea + glyoxylate. It participates in nitrogen metabolism; (S)-allantoin degradation. Functionally, catalyzes the catabolism of the allantoin degradation intermediate (S)-ureidoglycolate, generating urea and glyoxylate. Involved in the utilization of allantoin as nitrogen source. The polypeptide is Ureidoglycolate lyase (Pseudomonas putida (strain ATCC 700007 / DSM 6899 / JCM 31910 / BCRC 17059 / LMG 24140 / F1)).